The sequence spans 106 residues: NADH dehydrogenase [ubiquinone] 1 beta subcomplex subunit 10-B (106 aa).

Positions 1-25 (MGRKKGLPEFEESAPDGFDPENPYK) are disordered.

It belongs to the complex I NDUFB10 subunit family. Complex I is composed of at least 49 different subunits.

It localises to the mitochondrion inner membrane. Its function is as follows. Accessory subunit of the mitochondrial membrane respiratory chain NADH dehydrogenase (Complex I), that is believed not to be involved in catalysis. Complex I functions in the transfer of electrons from NADH to the respiratory chain. The immediate electron acceptor for the enzyme is believed to be ubiquinone. The chain is NADH dehydrogenase [ubiquinone] 1 beta subcomplex subunit 10-B from Arabidopsis thaliana (Mouse-ear cress).